A 121-amino-acid chain; its full sequence is MNNAPHLYFAWQQLVEKSQLMLRLATEEQWDELITSEMAYVNAVQEIAHLTEEVAPSTTMQEQLRPMLRLILDNESKVKQLLQIRMDELAKLVGQSSVQKSVLSAYGDQGGFVLAPQDNLF.

Residues 1 to 50 are required for homodimerization; it reads MNNAPHLYFAWQQLVEKSQLMLRLATEEQWDELITSEMAYVNAVQEIAHL. Positions 60–98 are fliD binding; the sequence is MQEQLRPMLRLILDNESKVKQLLQIRMDELAKLVGQSSV.

Belongs to the FliT family. In terms of assembly, homodimer. Interacts with FliD and FlhC.

The protein resides in the cytoplasm. The protein localises to the cytosol. Functionally, dual-function protein that regulates the transcription of class 2 flagellar operons and that also acts as an export chaperone for the filament-capping protein FliD. As a transcriptional regulator, acts as an anti-FlhDC factor; it directly binds FlhC, thus inhibiting the binding of the FlhC/FlhD complex to class 2 promoters, resulting in decreased expression of class 2 flagellar operons. As a chaperone, effects FliD transition to the membrane by preventing its premature polymerization, and by directing it to the export apparatus. This Escherichia coli (strain 55989 / EAEC) protein is Flagellar protein FliT.